A 90-amino-acid chain; its full sequence is Probable Fe(2+)-trafficking protein (90 aa).

It belongs to the Fe(2+)-trafficking protein family.

Functionally, could be a mediator in iron transactions between iron acquisition and iron-requiring processes, such as synthesis and/or repair of Fe-S clusters in biosynthetic enzymes. In Variovorax paradoxus (strain S110), this protein is Probable Fe(2+)-trafficking protein.